A 481-amino-acid polypeptide reads, in one-letter code: MSAKADIALIGLAVMGQNLVLNMNDKGFVVCAYNRTVEKVNQFLKNEAKGTNVIGATSLQDMVNKLKLPRKIMLLVKAGSAVDDFIQQLVPLLSPGDVIIDGGNSEYQDTARRCDELRAKKILYVGSGVSGGEEGARHGPSLMPGGHPEAWPLIQPIFQSICAKADKEPCCEWVGEGGAGHFVKMVHNGIEYGDMQLICEAYQIMKALGLSQAEMATEFEKWNSEELDSFLIEITRDILNYQDDRGYLLERIRDTAGQKGTGKWTAISALQYGVPVTLIGEAVFSRCLSALKDERVAASKQLKGPNVNAKVEDLPKFLNHIKHALYCSKIVSYAQGFMLMREAAKENNWNLNYGGIALMWRGGCIIRSVFLGNIKDAYTRNPQLSNLLLDDFFKKAIEVGQNSWRQVVANAFLWGIPVPALSTALSFYDGYRTEKLPANLLQAQRDYFGAHTYELLGAEGKFVHTNWTGTGGNVSASTYQA.

Residues 11 to 16 (GLAVMG), 34 to 36 (NRT), 76 to 78 (VKA), and Asn104 each bind NADP(+). Residues Asn104 and 130–132 (SGG) contribute to the substrate site. The Proton acceptor role is filled by Lys184. 187-188 (HN) lines the substrate pocket. The active-site Proton donor is Glu191. Substrate is bound by residues Tyr192, Lys259, Arg286, Arg445, and His451.

Belongs to the 6-phosphogluconate dehydrogenase family. In terms of assembly, homodimer.

The enzyme catalyses 6-phospho-D-gluconate + NADP(+) = D-ribulose 5-phosphate + CO2 + NADPH. The protein operates within carbohydrate degradation; pentose phosphate pathway; D-ribulose 5-phosphate from D-glucose 6-phosphate (oxidative stage): step 3/3. Catalyzes the oxidative decarboxylation of 6-phosphogluconate to ribulose 5-phosphate and CO(2), with concomitant reduction of NADP to NADPH. This Ceratitis capitata (Mediterranean fruit fly) protein is 6-phosphogluconate dehydrogenase, decarboxylating (Pgd).